Here is a 225-residue protein sequence, read N- to C-terminus: MIEFEKRLVAREALKLIGDVKLLGLGSGSTVAIFVEELAKSDKAGKIKVIPSSKQIEEVARNQGLEVIYPDGERPEITVDGADEIDSNLNLLKGGGGALLREKVLAYNSSTYVIIADHTKLVEKLCSKRALPVEVLPYGVSWTLGNLIKRFNCDARIRIKDLSPFITDNGNVIVDINCPPLEDPASMESEVKGVPGVVEVGIFVGLADLVLIARGSEVKVLRQGF.

Substrate is bound by residues 27–30 (SGST), 80–83 (DGAD), and 93–96 (KGGG). E102 acts as the Proton acceptor in catalysis. Residue K120 participates in substrate binding.

The protein belongs to the ribose 5-phosphate isomerase family. As to quaternary structure, homodimer.

The enzyme catalyses aldehydo-D-ribose 5-phosphate = D-ribulose 5-phosphate. The protein operates within carbohydrate degradation; pentose phosphate pathway; D-ribose 5-phosphate from D-ribulose 5-phosphate (non-oxidative stage): step 1/1. Functionally, catalyzes the reversible conversion of ribose-5-phosphate to ribulose 5-phosphate. This is Ribose-5-phosphate isomerase A from Korarchaeum cryptofilum (strain OPF8).